The primary structure comprises 766 residues: Single-minded homolog 1 (766 aa).

One can recognise a bHLH domain in the interval 1 to 53 (MKEKSKNAARTRREKENSEFYELAKLLPLPSAITSQLDKASIIRLTTSYLKMR). PAS domains follow at residues 77–147 (GREL…QPYH) and 218–288 (PPSA…LVKG). The region spanning 292-335 (TKYYRFLAKHGGWVWVQSYATIVHNSRSSRPHCIVSVNYVLTDT) is the PAC domain. The region spanning 336-766 (EYKGLQLSLD…GTSVIITNGS (431 aa)) is the Single-minded C-terminal domain. The span at 353 to 365 (AFSYTSSSTPTMT) shows a compositional bias: polar residues. Disordered stretches follow at residues 353–431 (AFSY…SQHD), 528–563 (WDED…EPSK), and 642–662 (SPRE…SSPN). A Nuclear localization signal motif is present at residues 368 to 387 (RKGAKSRLSSSKSKSRTSPY). The span at 373-385 (SRLSSSKSKSRTS) shows a compositional bias: low complexity. Residues 394-404 (HTERSESDHDS) show a composition bias toward basic and acidic residues. The span at 649–662 (DNSPTALSRISSPN) shows a compositional bias: polar residues.

As to quaternary structure, efficient DNA binding requires dimerization with another bHLH protein. Heterodimer; forms a heterodimer with ARNT, ARNT2.

Its subcellular location is the nucleus. Its function is as follows. Transcriptional factor that may have pleiotropic effects during embryogenesis and in the adult. The polypeptide is Single-minded homolog 1 (SIM1) (Pan troglodytes (Chimpanzee)).